We begin with the raw amino-acid sequence, 502 residues long: Sodium/proline symporter (502 aa).

Helical transmembrane passes span 6-26, 42-62, 68-88, 127-147, 163-183, 192-212, 235-255, 276-296, 320-340, 371-391, 398-418, 430-450, and 452-472; these read PMLV…FIAW, LGPF…WLLM, IFLS…GAWI, IISA…GIVA, ALWA…FLAV, SLMI…VGGF, FVAI…PHIL, TWMI…IAYF, ILFN…AVMS, LVWV…ALAA, LGLV…VVLF, ALAG…YGWL, and LYEI…FSLL.

This sequence belongs to the sodium:solute symporter (SSF) (TC 2.A.21) family.

It is found in the cell inner membrane. It carries out the reaction L-proline(in) + Na(+)(in) = L-proline(out) + Na(+)(out). Catalyzes the sodium-dependent uptake of extracellular L-proline. The polypeptide is Sodium/proline symporter (Salmonella typhimurium (strain LT2 / SGSC1412 / ATCC 700720)).